We begin with the raw amino-acid sequence, 181 residues long: Oligoribonuclease (181 aa).

The Exonuclease domain occupies 8-171; the sequence is LIWIDLEMTG…DDIRESVAEL (164 aa). Residue Tyr129 is part of the active site.

It belongs to the oligoribonuclease family.

It localises to the cytoplasm. In terms of biological role, 3'-to-5' exoribonuclease specific for small oligoribonucleotides. The protein is Oligoribonuclease of Sodalis glossinidius (strain morsitans).